Consider the following 36-residue polypeptide: Photosystem I reaction center subunit VIII (36 aa).

Residues 5–27 (FLPSILVPLVGLVFPAIAIASLF) traverse the membrane as a helical segment.

This sequence belongs to the PsaI family.

The protein resides in the plastid. It localises to the chloroplast thylakoid membrane. May help in the organization of the PsaL subunit. This chain is Photosystem I reaction center subunit VIII, found in Chaetosphaeridium globosum (Charophycean green alga).